The following is a 268-amino-acid chain: Tryptophan synthase alpha chain (268 aa).

Residues Glu-49 and Asp-60 each act as proton acceptor in the active site.

Belongs to the TrpA family. In terms of assembly, tetramer of two alpha and two beta chains.

The enzyme catalyses (1S,2R)-1-C-(indol-3-yl)glycerol 3-phosphate + L-serine = D-glyceraldehyde 3-phosphate + L-tryptophan + H2O. Its pathway is amino-acid biosynthesis; L-tryptophan biosynthesis; L-tryptophan from chorismate: step 5/5. Its function is as follows. The alpha subunit is responsible for the aldol cleavage of indoleglycerol phosphate to indole and glyceraldehyde 3-phosphate. The sequence is that of Tryptophan synthase alpha chain from Escherichia coli O7:K1 (strain IAI39 / ExPEC).